The sequence spans 402 residues: Protein FixF (402 aa).

This is Protein FixF (fixF) from Sinorhizobium fredii (strain NBRC 101917 / NGR234).